The following is a 64-amino-acid chain: MAKLKTRRGAAKRFKATANGFKRKQAFKRHILTKKSAKRIRQLRGCVMVHVSDVASVRRMCPYI.

This sequence belongs to the bacterial ribosomal protein bL35 family.

This is Large ribosomal subunit protein bL35 from Acinetobacter baumannii (strain AB307-0294).